The primary structure comprises 447 residues: Monocarboxylate transporter 11 (447 aa).

Over 1-11 (MTPKPAGPPDG) the chain is Cytoplasmic. 12 helical membrane-spanning segments follow: residues 12-32 (GWGW…YGLL), 54-74 (AWVS…GSAL), 80-100 (ARPV…FSAF), 107-127 (LYLG…APAL), 139-159 (VLAV…LAPA), 162-182 (FLLD…VTLH), 219-239 (AFSV…VPYV), 249-269 (GMGG…DACA), 288-308 (LVVF…VPTV), 330-350 (GSYA…GGVV), 354-374 (GLVM…SGFL), and 383-403 (ASFL…MGLP). Residues 404-447 (RALPSCRPASPPATPPPERGELLPVPQVSLLSAGGTGSIRDTTC) lie on the Cytoplasmic side of the membrane.

This sequence belongs to the major facilitator superfamily. Monocarboxylate porter (TC 2.A.1.13) family. In terms of assembly, interacts with isoform 2 of BSG.

The protein resides in the endoplasmic reticulum membrane. It localises to the cell membrane. It catalyses the reaction pyruvate(out) + H(+)(out) = pyruvate(in) + H(+)(in). In terms of biological role, proton-linked monocarboxylate transporter. It catalyzes the transport of pyruvate across the plasma membrane. Probably involved in hepatic lipid metabolism: overexpression results in an increase of triacylglycerol(TAG) levels, small increases in intracellular diacylglycerols and decreases in lysophosphatidylcholine, cholesterol ester and sphingomyelin lipids. The chain is Monocarboxylate transporter 11 (Slc16a11) from Mus musculus (Mouse).